The sequence spans 805 residues: Nitrite reductase [NAD(P)H] (805 aa).

43 to 79 (YNRILLSKVLQGDTDIKDITLNDWDWYEENNIQLYTN) provides a ligand contact to FAD. 193–223 (LQNELEKQGMTFLLEKQTEEIVGDDRVEGLR) contributes to the NADP(+) binding site. Residues Cys418, Cys420, Cys453, and Cys456 each contribute to the [2Fe-2S] cluster site. Cys635, Cys641, Cys675, and Cys679 together coordinate [4Fe-4S] cluster. Cys679 is a binding site for siroheme.

The protein belongs to the nitrite and sulfite reductase 4Fe-4S domain family. As to quaternary structure, homodimer. Requires siroheme as cofactor. [2Fe-2S] cluster serves as cofactor. It depends on [4Fe-4S] cluster as a cofactor. The cofactor is FAD.

It carries out the reaction NH4(+) + 3 NADP(+) + 2 H2O = nitrite + 3 NADPH + 5 H(+). The enzyme catalyses NH4(+) + 3 NAD(+) + 2 H2O = nitrite + 3 NADH + 5 H(+). It functions in the pathway nitrogen metabolism; nitrate reduction (assimilation). Required for nitrite assimilation. The sequence is that of Nitrite reductase [NAD(P)H] (nasD) from Bacillus subtilis (strain 168).